Reading from the N-terminus, the 469-residue chain is Protein RdxA (469 aa).

The Cytoplasmic portion of the chain corresponds to M1–T23. The helical transmembrane segment at A24–W44 threads the bilayer. The Periplasmic portion of the chain corresponds to D45–E75. A helical transmembrane segment spans residues F76–A96. Topologically, residues A97–W149 are cytoplasmic. A helical membrane pass occupies residues S150–A170. Residues P171 to H183 lie on the Periplasmic side of the membrane. Residues P184 to M204 form a helical membrane-spanning segment. At R205–R327 the chain is on the cytoplasmic side. 4Fe-4S ferredoxin-type domains are found at residues K242–G270 and D266–P295. [4Fe-4S] cluster is bound by residues C251, C254, C257, C261, C275, C278, C281, and C285. Residues T328–L348 traverse the membrane as a helical segment. Residues R349–S469 are Periplasmic-facing.

It localises to the cell membrane. Predicted to be involved in a redox process. The chain is Protein RdxA (rdxA) from Cereibacter sphaeroides (strain ATCC 17023 / DSM 158 / JCM 6121 / CCUG 31486 / LMG 2827 / NBRC 12203 / NCIMB 8253 / ATH 2.4.1.) (Rhodobacter sphaeroides).